A 1375-amino-acid polypeptide reads, in one-letter code: MANTLVGRKRIRKFFGKIREVAEMPNLIEVQKASYDQFLMVDEPEGGRADEGLQSVFKSVFPISDFASTALLEFVRYTFEQPKYDVDECRQRGITFAAPLKVTLRLIVFDVDPDTGAKSVKDIKEQDVYMGDMPLMTDNGTFIVNGTERVIVSQMHRSPGVFFDHDKGKTHSSGKLLFAARIIPYRGSWLDVEFDAKDIVHVRIDRKRKLPVTSLLFALGLDGEEILSTFYNRVSYERDGADWRVPFDAERLKGFKASVDLIDADSGEVVLEAGKKLNARNARLIGEKGTKFLKATDEDLVGQYIAEDLVNAKTGEIWAEAGDEISEKLLKALDDVGVTEIPVLDIDHVNVGPYIRNTLAVDKNSAREGALFDIYRVMRPGEPPTLDTAEAMFHSLFFDAERYDLSAVGRVKMNMRLDLDAADTVRTLRREDMLAVVKALVDLRDGKGEIDDIDHLGNRRVRSVGELMENQYRLGLLRMERAIKERMSSVDIDTVMPQDLINAKPAAAAVREFFGSSQLSQFMDQTNPLSEVTHKRRLSALGPGGLTRERAGFEVRDVHPTHYGRICPIETPEGPNIGLINSLATFARVNKYGFIETPFRRVKDGVVTDEVAYLSAMEEAKYYVAQANAGMDAARKLTDDLVVCRRAGEVIVVAPDRVDLMDVSPKQLVSVAAALIPFLENDDANRALMGSNMQRQAVPLVRADAPFVGTGMEAVVARDSGAAIAARRSGIVDQVDATRIVIRATEETDPTKPGVDIYRLQKFQRSNQSTCITQKPLVRVGEPVKKGEIIADGPSTEFGELALGRNVLVAFMPWNGYNFEDSILLSERIVKDDVFTSIHIEEFEVMARDTKLGPEEITRDIPNVSEEALKNLDEAGIVYIGAEVHAGDILVGKITPKGESPMTPEEKLLRAIFGEKASDVRDTSLRVPPGVTGTIVEVRVFNRHGVDKDERAQAIEREEIERLAKDRDDEQTILDRNTYARLAEVLIGQSPIAGPKGFRKDTTLTREGISEYPRSQWWQFAVVDDRLMTEIEAMQKQYDESKKRLEQRFLDKVEKLQRGDELPPGVMKMVKVFVAVKRKIQPGDKMAGRHGNKGVVSRIVPIEDMPFLEDGTHADIVLNPLGVPSRMNVGQILETHLGWAAAGLGRKVSKAVDAYLKNQDIAPLRAEMEAIYSPSELEGLSDEALAEAGNNVRRGVPMATPVFNGAKEADIETMLEMAGLDRSAQSTLYDGRTGEPFDRKVTMGYIYMLKLHHLVDDKIHARSIGPYSLVTQQPLGGKAQFGGQRFGEMEVWALEAYGAAYTLQEMLTVKSDDVAGRTKVYEAIVRGDDTFEAGIPESFNVLVKEMRSLGLNVELTNSKQQAANDQIEPPADAAE.

The protein belongs to the RNA polymerase beta chain family. In terms of assembly, the RNAP catalytic core consists of 2 alpha, 1 beta, 1 beta' and 1 omega subunit. When a sigma factor is associated with the core the holoenzyme is formed, which can initiate transcription.

It catalyses the reaction RNA(n) + a ribonucleoside 5'-triphosphate = RNA(n+1) + diphosphate. DNA-dependent RNA polymerase catalyzes the transcription of DNA into RNA using the four ribonucleoside triphosphates as substrates. This is DNA-directed RNA polymerase subunit beta from Methylorubrum populi (strain ATCC BAA-705 / NCIMB 13946 / BJ001) (Methylobacterium populi).